Consider the following 669-residue polypeptide: DNA ligase (669 aa).

NAD(+) contacts are provided by residues 34 to 38 (DAEYD), 83 to 84 (SL), and glutamate 114. Lysine 116 functions as the N6-AMP-lysine intermediate in the catalytic mechanism. The NAD(+) site is built by arginine 137, glutamate 171, lysine 287, and lysine 311. The Zn(2+) site is built by cysteine 405, cysteine 408, cysteine 423, and cysteine 428. The 79-residue stretch at 591-669 (NVESYFAGKT…EERFLQELNK (79 aa)) folds into the BRCT domain.

It belongs to the NAD-dependent DNA ligase family. LigA subfamily. Mg(2+) serves as cofactor. The cofactor is Mn(2+).

It carries out the reaction NAD(+) + (deoxyribonucleotide)n-3'-hydroxyl + 5'-phospho-(deoxyribonucleotide)m = (deoxyribonucleotide)n+m + AMP + beta-nicotinamide D-nucleotide.. Functionally, DNA ligase that catalyzes the formation of phosphodiester linkages between 5'-phosphoryl and 3'-hydroxyl groups in double-stranded DNA using NAD as a coenzyme and as the energy source for the reaction. It is essential for DNA replication and repair of damaged DNA. This Bacillus mycoides (strain KBAB4) (Bacillus weihenstephanensis) protein is DNA ligase.